The sequence spans 598 residues: Nicotinamide riboside transporter 1 (598 aa).

11 helical membrane-spanning segments follow: residues 48 to 68, 71 to 91, 112 to 132, 174 to 194, 197 to 217, 241 to 261, 273 to 293, 372 to 392, 395 to 415, 447 to 467, and 484 to 504; these read LAYWGAVSFTAGTWMSGSAAL, GLSYPETIVSFLLGNVLTIIF, FVFGIYGSAFGIIIRILMSIV, LVGFIIFHVLTALCYFMKPYH, YLLIWSCVATCFAMLGIVIYL, AWAWVYMISYWFGSISPGSTN, LAIWTGSVCALLIPATLVPIF, GALFCACISWACLPWNFYNSS, FLTVMSSFGVVMTPIIAVMIC, AIVAWVCGMAPGLPGIAWEVN, and SFFSFLISFFVYWGLCVFFPF. Ser560 and Ser572 each carry phosphoserine.

The protein belongs to the purine-cytosine permease (2.A.39) family.

It localises to the cell membrane. Functionally, high-affinity pH-dependent nicotinamide riboside transporter which also transports thiamine with low affinity. Involved in 5-fluorocytosine sensitivity. The protein is Nicotinamide riboside transporter 1 (NRT1) of Saccharomyces cerevisiae (strain ATCC 204508 / S288c) (Baker's yeast).